A 427-amino-acid polypeptide reads, in one-letter code: Probable purple acid phosphatase 20 (427 aa).

Positions 1 to 21 (MVKVLGLVAILLIVLAGNVLS) are cleaved as a signal peptide. Asn85 is a glycosylation site (N-linked (GlcNAc...) asparagine). 3 residues coordinate Fe cation: Asp147, Asp174, and Tyr177. Residue Asp174 participates in Zn(2+) binding. Positions 207 and 291 each coordinate Zn(2+). Asn207 lines the substrate pocket. Catalysis depends on His301, which acts as the Proton donor. Position 330 (His330) interacts with Zn(2+). Residue 330-332 (HVH) coordinates substrate. Position 332 (His332) interacts with Fe cation. Residue Asn392 is glycosylated (N-linked (GlcNAc...) asparagine).

This sequence belongs to the metallophosphoesterase superfamily. Purple acid phosphatase family. As to quaternary structure, homodimer. Fe cation serves as cofactor. Requires Zn(2+) as cofactor. In terms of tissue distribution, expressed flowers and siliques.

The protein localises to the secreted. It carries out the reaction a phosphate monoester + H2O = an alcohol + phosphate. The protein is Probable purple acid phosphatase 20 (PAP20) of Arabidopsis thaliana (Mouse-ear cress).